The primary structure comprises 314 residues: Nodulation protein D 1 (314 aa).

The region spanning 6–63 (LDLNLLVALDALMTERNLTAAARQINLSQPAMSAAIARLRSYFRDELFTMRGRELVPT) is the HTH lysR-type domain. The segment at residues 23-42 (LTAAARQINLSQPAMSAAIA) is a DNA-binding region (H-T-H motif).

It belongs to the LysR transcriptional regulatory family.

Its function is as follows. NodD regulates the expression of the nodABCFE genes which encode other nodulation proteins. NodD is also a negative regulator of its own expression. Binds flavonoids as inducers. This Bradyrhizobium elkanii protein is Nodulation protein D 1 (nodD1).